The following is a 548-amino-acid chain: Chaperonin GroEL 2 (548 aa).

ATP-binding positions include 30 to 33 (TLGP), Lys51, 87 to 91 (DGTTT), Gly415, 479 to 481 (NAA), and Asp495. A disordered region spans residues 524–548 (APKDAPPTAPAGVPGAGAGGPGFDF). The segment covering 537-548 (PGAGAGGPGFDF) has biased composition (gly residues).

This sequence belongs to the chaperonin (HSP60) family. Forms a cylinder of 14 subunits composed of two heptameric rings stacked back-to-back. Interacts with the co-chaperonin GroES.

The protein resides in the cytoplasm. It catalyses the reaction ATP + H2O + a folded polypeptide = ADP + phosphate + an unfolded polypeptide.. In terms of biological role, together with its co-chaperonin GroES, plays an essential role in assisting protein folding. The GroEL-GroES system forms a nano-cage that allows encapsulation of the non-native substrate proteins and provides a physical environment optimized to promote and accelerate protein folding. This is Chaperonin GroEL 2 from Burkholderia pseudomallei (strain 668).